The following is a 302-amino-acid chain: Possible hemolysin C (302 aa).

CBS domains are found at residues 79 to 141 (MVPR…NFRL) and 144 to 201 (LIRK…IDDE).

It belongs to the UPF0053 family. Hemolysin C subfamily.

The sequence is that of Possible hemolysin C (tlyC) from Rickettsia bellii (strain OSU 85-389).